A 213-amino-acid chain; its full sequence is Leucyl/phenylalanyl-tRNA--protein transferase (213 aa).

It belongs to the L/F-transferase family.

It localises to the cytoplasm. The catalysed reaction is N-terminal L-lysyl-[protein] + L-leucyl-tRNA(Leu) = N-terminal L-leucyl-L-lysyl-[protein] + tRNA(Leu) + H(+). The enzyme catalyses N-terminal L-arginyl-[protein] + L-leucyl-tRNA(Leu) = N-terminal L-leucyl-L-arginyl-[protein] + tRNA(Leu) + H(+). It carries out the reaction L-phenylalanyl-tRNA(Phe) + an N-terminal L-alpha-aminoacyl-[protein] = an N-terminal L-phenylalanyl-L-alpha-aminoacyl-[protein] + tRNA(Phe). Functionally, functions in the N-end rule pathway of protein degradation where it conjugates Leu, Phe and, less efficiently, Met from aminoacyl-tRNAs to the N-termini of proteins containing an N-terminal arginine or lysine. The chain is Leucyl/phenylalanyl-tRNA--protein transferase from Rhodospirillum rubrum (strain ATCC 11170 / ATH 1.1.1 / DSM 467 / LMG 4362 / NCIMB 8255 / S1).